The primary structure comprises 354 residues: Ferrochelatase (354 aa).

Fe cation is bound by residues H214 and E295.

It belongs to the ferrochelatase family.

The protein localises to the cytoplasm. It catalyses the reaction heme b + 2 H(+) = protoporphyrin IX + Fe(2+). Its pathway is porphyrin-containing compound metabolism; protoheme biosynthesis; protoheme from protoporphyrin-IX: step 1/1. Its function is as follows. Catalyzes the ferrous insertion into protoporphyrin IX. The sequence is that of Ferrochelatase from Burkholderia orbicola (strain AU 1054).